The primary structure comprises 218 residues: Uracil-DNA glycosylase (218 aa).

The active-site Proton acceptor is Asp59.

The protein belongs to the uracil-DNA glycosylase (UDG) superfamily. UNG family.

The protein localises to the cytoplasm. The catalysed reaction is Hydrolyzes single-stranded DNA or mismatched double-stranded DNA and polynucleotides, releasing free uracil.. Its function is as follows. Excises uracil residues from the DNA which can arise as a result of misincorporation of dUMP residues by DNA polymerase or due to deamination of cytosine. This Staphylococcus aureus (strain MSSA476) protein is Uracil-DNA glycosylase.